The primary structure comprises 533 residues: Decreased expression in renal and prostate cancer protein (533 aa).

A compositionally biased stretch (basic and acidic residues) spans 1 to 12 (MKEPRIFPRERP). Disordered stretches follow at residues 1-31 (MKEP…GGPV), 67-164 (QNPS…PDPR), 177-259 (MRAG…RAGG), and 299-350 (ASGN…PNSA). S160 bears the Phosphoserine mark. Residues 299 to 309 (ASGNMGTNPPT) show a composition bias toward polar residues. Position 368 is an asymmetric dimethylarginine (R368). The residue at position 396 (R396) is an Omega-N-methylarginine. S432 carries the phosphoserine modification.

The protein belongs to the DERPC family.

The protein resides in the nucleus. Its function is as follows. Potential tumor suppressor. This is Decreased expression in renal and prostate cancer protein from Mus musculus (Mouse).